Consider the following 453-residue polypeptide: Midnolin-A (453 aa).

A Ubiquitin-like domain is found at 20-94; it reads MNLNIQSTTG…LTLLPSVEAG (75 aa). Disordered stretches follow at residues 184–219, 232–256, 333–376, and 390–429; these read SHLA…TTSV, CAEQ…RSRK, RNAK…ENRA, and QKRL…EGSL. A compositionally biased stretch (polar residues) spans 206–219; the sequence is HCNGPHSSPLTTSV. Composition is skewed to low complexity over residues 239 to 252 and 338 to 351; these read STRG…SPSS and TSPQ…TTHP. Basic and acidic residues predominate over residues 365 to 376; the sequence is SGDRLRQTENRA. The segment covering 390 to 399 has biased composition (basic residues); sequence QKRLRRKARR. Residues 415 to 428 are compositionally biased toward low complexity; that stretch reads RTSSNSSTSSGEGS.

Its subcellular location is the nucleus. The protein resides in the cytoplasm. It is found in the cytosol. The protein localises to the nucleolus. Functionally, facilitates ubiquitin-independent proteasomal degradation of polycomb protein CBX4. Plays a role in inhibiting the activity of glucokinase GCK and both glucose-induced and basal insulin secretion. This chain is Midnolin-A (midn-a), found in Xenopus laevis (African clawed frog).